A 157-amino-acid polypeptide reads, in one-letter code: DNA gyrase inhibitor (157 aa).

It belongs to the DNA gyrase inhibitor family. Interacts with DNA gyrase.

The protein localises to the cytoplasm. In terms of biological role, inhibits the supercoiling activity of DNA gyrase. Acts by inhibiting DNA gyrase at an early step, prior to (or at the step of) binding of DNA by the gyrase. It protects cells against toxins that target DNA gyrase, by inhibiting activity of these toxins and reducing the formation of lethal double-strand breaks in the cell. This Klebsiella pneumoniae (strain 342) protein is DNA gyrase inhibitor.